A 172-amino-acid polypeptide reads, in one-letter code: Ribosome maturation factor RimM (172 aa).

Residues 95–168 (AEGEFYYHQI…RVDVEIMEGL (74 aa)) form the PRC barrel domain.

It belongs to the RimM family. As to quaternary structure, binds ribosomal protein uS19.

The protein resides in the cytoplasm. In terms of biological role, an accessory protein needed during the final step in the assembly of 30S ribosomal subunit, possibly for assembly of the head region. Essential for efficient processing of 16S rRNA. May be needed both before and after RbfA during the maturation of 16S rRNA. It has affinity for free ribosomal 30S subunits but not for 70S ribosomes. This is Ribosome maturation factor RimM from Streptococcus equi subsp. equi (strain 4047).